A 509-amino-acid chain; its full sequence is Probable aspartic-type endopeptidase CTSD (509 aa).

The first 21 residues, 1–21 (MQFLWLCLLSAVTLQFTGTLA), serve as a signal peptide directing secretion. A Peptidase A1 domain is found at 102-408 (YFSEVKVGSE…DFDKNRVGLA (307 aa)). D120 is a catalytic residue. An N-linked (GlcNAc...) asparagine glycan is attached at N174. The active site involves D302. An N-linked (GlcNAc...) asparagine glycan is attached at N361. The disordered stretch occupies residues 451-489 (NKAPSGGSPGLPAESGSDSTTNGEATNGATSSPNSSSSV). Positions 466-480 (GSDSTTNGEATNGAT) are enriched in polar residues. N484 carries an N-linked (GlcNAc...) asparagine glycan. S485 is lipidated: GPI-anchor amidated serine. A propeptide spans 486 to 509 (SSSVLTPTWLTLAVFFAIGSSLWS) (removed in mature form).

This sequence belongs to the peptidase A1 family.

It is found in the cell membrane. Functionally, probable GPI-anchored aspartic-type endopeptidase which contributes to virulence. This chain is Probable aspartic-type endopeptidase CTSD (CTSD), found in Trichophyton verrucosum (strain HKI 0517).